The sequence spans 574 residues: Enolase 4 (574 aa).

Residues 165 to 175 show a composition bias toward basic and acidic residues; sequence EKERRQMEREA. The tract at residues 165–221 is disordered; the sequence is EKERRQMEREASPMPLQPEPSPVTSPAPGKKKGSGKGKKAAVVEKPIPPEETPEAVV. Over residues 179–189 the composition is skewed to pro residues; that stretch reads PLQPEPSPVTS. The segment covering 193 to 203 has biased composition (basic residues); the sequence is GKKKGSGKGKK. Residue glutamate 287 coordinates substrate. The active-site Proton acceptor is lysine 467. Lysine 518 contacts substrate.

Belongs to the enolase family.

It carries out the reaction (2R)-2-phosphoglycerate = phosphoenolpyruvate + H2O. It participates in carbohydrate degradation; glycolysis; pyruvate from D-glyceraldehyde 3-phosphate: step 4/5. The sequence is that of Enolase 4 (eno4) from Xenopus tropicalis (Western clawed frog).